We begin with the raw amino-acid sequence, 202 residues long: GTP cyclohydrolase 1 (202 aa).

3 residues coordinate Zn(2+): Cys90, His93, and Cys163.

This sequence belongs to the GTP cyclohydrolase I family. As to quaternary structure, homomer.

The enzyme catalyses GTP + H2O = 7,8-dihydroneopterin 3'-triphosphate + formate + H(+). The protein operates within cofactor biosynthesis; 7,8-dihydroneopterin triphosphate biosynthesis; 7,8-dihydroneopterin triphosphate from GTP: step 1/1. The chain is GTP cyclohydrolase 1 from Mycolicibacterium gilvum (strain PYR-GCK) (Mycobacterium gilvum (strain PYR-GCK)).